Consider the following 1730-residue polypeptide: MNVQPCSRCGYGVYPAEKISCIDQIWHKACFHCEVCKMMLSVNNFVSHQKKPYCHAHNPKNNTFTSVYHTPLNLNVRTFPEAISGIHDQEDGEQCKSVFHWDMKSKDKEGAPNRQPLANERAYWTGYGEGNAWCPGALPDPEIVRMVEARKSLGEEYTEDYEQPRGKGSFPAMITPAYQRAKKANQLASQVEYKRGHDERISRFSTVVDTPELLRSKAGAQLQSDVRYTEDYEQQRGKGSFPAMITPAYQIAKRANELASDVRYHQQYQKEMRGMAGPAIGAEGILTRECADQYGQGYPEEYEEHRGKGSFPAMITPAYQNAKKAHELASDIKYRQDFNKMKGAAHYHSLPAQDNLVLKQAQSVNKLVSEVEYKKDLESSRGHSINYCETPQFRNVSKISKFTSDNKYKENYQNHMRGRYEGVGMDRRTLHAMKVGSLASNVAYKADYKHDIVDYNYPATLTPSYQTAMKLVPLKDANYRQSIDKLKYSSVTDTPQIVQAKINAQQLSHVNYRADYEKNKLNYTLPQDVPQLVKAKTNAKLFSEVKYKEGWEKTKGKGFEMKLDAMSLLAAKASGELASNIKYKEEYEKTKGKAMGTADSRLLHSLQIAKMSSEVEYKKGFEESKTRFHLPMDMVNIRHAKKAQTLASDLDYRKKLHEYTVLPEDMKTQWAKKAYGLQSELQYKADLAWMKGVGWLTEGSLNLEQAKKAGQLVSEKNYRQRVDELKFTSVTDSSQMEHAKKSQELQSGVAYKAGNEQSVHQYTISKDEPLFLQARANAANLSEKLYKSSWENQKAKGFELRLDSLTFLAAKAKRDLASEVKYKEDYERSRGKLIGAKDVQGDSQMSHSLQMSKLQSELEYKKGFEDTKSQCHVSLDMVHLVHARKAQHLATDVGYKTAEHHFTALPTDMKVEWAKKAYGLQSDNQYRADVKWMKGMGWVATGSLNVEQAKKAGELISEKKYRQHPDALKFTSIKDTPEMVQARISYTQAVDRLYREQGENIKHHYTPTADLPEVLLAKLNAMNISETRYKESWSKLRDGGYKLRLDALPFQAAKASGEIISDYKYKEAFEKMKGQMLGSRSLEDDISLAHSVYATSLQSDVNYKKGFEHSKAQFHLPLDMAALVHAKKAQTLASNQDYKHPLPQYTSLAEDLRLSCAKKAHKLQSENLYRSDLNFMRGVACVIPGTLEIEGRKKASELISESKYRQHPHSFKYTAVTDTPNLLHAKFSNQITNERLYKAAGEDARHEYTMTLGLPEFIRAKTNAANLSDARYKESWRNLRAQGYKLTIEALPFQAARASGDIASDFLYRHDFVKERGKLIGPQSVRDDPRIQHCRRMGQLQSELQYRRGATSSQAQFHLPMDMVHLVHAKNAQALASDHDYRTQYHKFTALPEDLKMAWAKKAHALQSELRYKSDLIGMKGIGWLALRSPQMESAKKAGELISETKYRKKPDSIKFTTVVDSPDLVHAKNSYMHCNERMYRSGDAESLHRYTLIPDHPDFTRARLNALHLSDKVYRNSWEQTRAGSYDFRLDAIPFQTARASREIASDFRYKEAFLRDRGLQIGYRSVDDDPRMKHFLNVGRLQSDNEYKKDFAKSRSQFHSSTDQPGLLQAKRSQQLASDVHYRQPLPQPTCDPEQLGLRHAQKAHQLQSDVKYKSDLNLTRGVGWTPPGSYKVEMARRAAELANARGLGLQGAYRGAEAVEAGDHQSGEVNPDATEILHVKKKKALLL.

The LIM zinc-binding domain occupies 4 to 64; that stretch reads QPCSRCGYGV…HAHNPKNNTF (61 aa). Nebulin repeat units lie at residues 63-97, 156-166, 175-202, 203-237, 246-273, 298-307, 316-343, 348-382, 389-417, 419-453, 487-521, 522-556, 558-592, 602-626, 627-661, 662-692, 702-724, 726-760, 761-795, 797-831, 844-869, 870-896, 901-935, 945-963, 969-1003, 1004-1038, 1040-1074, 1078-1112, 1113-1139, 1144-1178, 1183-1206, 1212-1246, 1247-1281, 1283-1317, 1321-1355, 1356-1390, 1391-1421, 1429-1449, 1455-1481, 1490-1524, 1526-1560, 1564-1598, 1599-1626, and 1640-1664; these read TFTSVYHTPLNLNVRTFPEAISGIHDQEDGEQCKS, EYTEDYEQPRG, TPAYQRAKKANQLASQVEYKRGHDERIS, RFSTVVDTPELLRSKAGAQLQSDVRYTEDYEQQRG, TPAYQIAKRANELASDVRYHQQYQKEMR, YPEEYEEHRG, TPAYQNAKKAHELASDIKYRQDFNKMKG, HSLPAQDNLVLKQAQSVNKLVSEVEYKKDLESSRG, ETPQFRNVSKISKFTSDNKYKENYQNHMR, RYEGVGMDRRTLHAMKVGSLASNVAYKADYKHDIV, KYSSVTDTPQIVQAKINAQQLSHVNYRADYEKNKL, NYTLPQDVPQLVKAKTNAKLFSEVKYKEGWEKTKG, GFEMKLDAMSLLAAKASGELASNIKYKEEYEKTKG, LLHSLQIAKMSSEVEYKKGFEESKT, RFHLPMDMVNIRHAKKAQTLASDLDYRKKLHEYTV, LPEDMKTQWAKKAYGLQSELQYKADLAWMKG, NLEQAKKAGQLVSEKNYRQRVDE, KFTSVTDSSQMEHAKKSQELQSGVAYKAGNEQSVH, QYTISKDEPLFLQARANAANLSEKLYKSSWENQKA, GFELRLDSLTFLAAKAKRDLASEVKYKEDYERSRG, QMSHSLQMSKLQSELEYKKGFEDTKS, QCHVSLDMVHLVHARKAQHLATDVGYK, HFTALPTDMKVEWAKKAYGLQSDNQYRADVKWMKG, NVEQAKKAGELISEKKYRQ, KFTSIKDTPEMVQARISYTQAVDRLYREQGENIKH, HYTPTADLPEVLLAKLNAMNISETRYKESWSKLRD, GYKLRLDALPFQAAKASGEIISDYKYKEAFEKMKG, GSRSLEDDISLAHSVYATSLQSDVNYKKGFEHSKA, QFHLPLDMAALVHAKKAQTLASNQDYK, QYTSLAEDLRLSCAKKAHKLQSENLYRSDLNFMRG, IPGTLEIEGRKKASELISESKYRQ, KYTAVTDTPNLLHAKFSNQITNERLYKAAGEDARH, EYTMTLGLPEFIRAKTNAANLSDARYKESWRNLRA, GYKLTIEALPFQAARASGDIASDFLYRHDFVKERG, GPQSVRDDPRIQHCRRMGQLQSELQYRRGATSSQA, QFHLPMDMVHLVHAKNAQALASDHDYRTQYHKFTA, LPEDLKMAWAKKAHALQSELRYKSDLIGMKG, SPQMESAKKAGELISETKYRK, KFTTVVDSPDLVHAKNSYMHCNERMYR, RYTLIPDHPDFTRARLNALHLSDKVYRNSWEQTRA, SYDFRLDAIPFQTARASREIASDFRYKEAFLRDRG, GYRSVDDDPRMKHFLNVGRLQSDNEYKKDFAKSRS, QFHSSTDQPGLLQAKRSQQLASDVHYRQ, and LRHAQKAHQLQSDVKYKSDLNLTRG. Position 1081 is a phosphoserine (serine 1081). The segment at 1595–1620 is disordered; sequence KSRSQFHSSTDQPGLLQAKRSQQLAS. Residues 1596–1606 are compositionally biased toward polar residues; sequence SRSQFHSSTDQ.

As to quaternary structure, interacts with actin, alpha-actinin, KLHL41, TLN1 and VCL. Interacts with CSRP3. As to expression, expressed in cardiac and skeletal muscle.

Its function is as follows. May be involved in anchoring the terminal actin filaments in the myofibril to the membrane and in transmitting tension from the myofibrils to the extracellular matrix. The sequence is that of Nebulin-related-anchoring protein from Homo sapiens (Human).